Here is a 305-residue protein sequence, read N- to C-terminus: Mitochondrial brown fat uncoupling protein 1 (305 aa).

Residues 1–10 (MVGHAATDVP) lie on the Mitochondrial intermembrane side of the membrane. Residues 11–32 (PTMAVKIFSAGVAACVADIITF) form a helical membrane-spanning segment. 3 Solcar repeats span residues 11 to 102 (PTMA…VQEF), 109 to 199 (ASLG…MKEA), and 208 to 293 (DDVP…LKRE). The Mitochondrial matrix portion of the chain corresponds to 33-73 (PLDTAKVRLQIQGECLTSSAFRYKGVLGTIITLAKTEGPVK). Position 56 (Lys56) interacts with fatty acid 16:0. The chain crosses the membrane as a helical span at residues 74-96 (LYSGLPAGLQRQISFASLRIGLY). Residues 97-114 (DTVQEFFTTGKEASLGSK) lie on the Mitochondrial intermembrane side of the membrane. The chain crosses the membrane as a helical span at residues 115–131 (ISAGLTTGGVAVFIGQP). The Mitochondrial matrix segment spans residues 132–176 (TEVVKVRLQAQSHLHGPKPRYTGTYNAYRIIATTEGLTGLWKGTT). Residues 177 to 193 (PNLTRNVIINCTELVTY) form a helical membrane-spanning segment. Residues 194–210 (DLMKEALVKNKLLADDV) lie on the Mitochondrial intermembrane side of the membrane. Residues 211-230 (PCHFVSAVVAGFCTTVLSSP) traverse the membrane as a helical segment. Topologically, residues 231-264 (VDVVKTRFVNSSPGQYTSVPNCAMMMLTREGPSA) are mitochondrial matrix. Cys252 is modified (cysteine sulfenic acid (-SOH)). A helical transmembrane segment spans residues 265–287 (FFKGFVPSFLRLGSWNIIMFVCF). Lys267 lines the fatty acid 16:0 pocket. Over 288–305 (EQLKRELMKSRQAMDCAT) the chain is Mitochondrial intermembrane.

It belongs to the mitochondrial carrier (TC 2.A.29) family. Most probably functions as a monomer. Binds one purine nucleotide per monomer. However, has also been suggested to function as a homodimer or a homotetramer. Tightly associates with cardiolipin in the mitochondrion inner membrane; may stabilize and regulate its activity. Post-translationally, may undergo sulfenylation upon cold exposure. May increase the sensitivity of UCP1 thermogenic function to the activation by noradrenaline probably through structural effects. In terms of processing, may undergo ubiquitin-mediated proteasomal degradation.

It is found in the mitochondrion inner membrane. The enzyme catalyses H(+)(in) = H(+)(out). Its activity is regulated as follows. Has no constitutive proton transporter activity and has to be activated by long-chain fatty acids/LCFAs. Inhibited by purine nucleotides. Both purine nucleotides and LCFAs bind the cytosolic side of the transporter and directly compete to activate or inhibit it. Activated by noradrenaline and reactive oxygen species. Despite lacking canonical translational encoding for selenocysteine, a small pool of the protein has been observed to selectively incorporate selenocysteine at 'Cys-252'. Selenocysteine-modified protein is highly sensitive to redox modification and may constitute a pool of protein highly sensitive to activation by elevated levels of reactive oxygen species (ROS). Its function is as follows. Mitochondrial protein responsible for thermogenic respiration, a specialized capacity of brown adipose tissue and beige fat that participates in non-shivering adaptive thermogenesis to temperature and diet variations and more generally to the regulation of energy balance. Functions as a long-chain fatty acid/LCFA and proton symporter, simultaneously transporting one LCFA and one proton through the inner mitochondrial membrane. However, LCFAs remaining associated with the transporter via their hydrophobic tails, it results in an apparent transport of protons activated by LCFAs. Thereby, dissipates the mitochondrial proton gradient and converts the energy of substrate oxydation into heat instead of ATP. Regulates the production of reactive oxygen species/ROS by mitochondria. This is Mitochondrial brown fat uncoupling protein 1 from Ovis aries (Sheep).